We begin with the raw amino-acid sequence, 67 residues long: MPQLDTSTWFTTIVAMILSLFILMQLKFHKYTYPMNPVLKALESTSFPCPWETKWTKIYSPLSLPQH.

Residues 8 to 24 (TWFTTIVAMILSLFILM) traverse the membrane as a helical segment. K54 is modified (N6-acetyllysine; alternate). K54 carries the N6-succinyllysine; alternate modification. K57 is subject to N6-acetyllysine.

This sequence belongs to the ATPase protein 8 family. As to quaternary structure, component of the ATP synthase complex composed at least of ATP5F1A/subunit alpha, ATP5F1B/subunit beta, ATP5MC1/subunit c (homooctomer), MT-ATP6/subunit a, MT-ATP8/subunit 8, ATP5ME/subunit e, ATP5MF/subunit f, ATP5MG/subunit g, ATP5MK/subunit k, ATP5MJ/subunit j, ATP5F1C/subunit gamma, ATP5F1D/subunit delta, ATP5F1E/subunit epsilon, ATP5PF/subunit F6, ATP5PB/subunit b, ATP5PD/subunit d, ATP5PO/subunit OSCP. ATP synthase complex consists of a soluble F(1) head domain (subunits alpha(3) and beta(3)) - the catalytic core - and a membrane F(0) domain - the membrane proton channel (subunits c, a, 8, e, f, g, k and j). These two domains are linked by a central stalk (subunits gamma, delta, and epsilon) rotating inside the F1 region and a stationary peripheral stalk (subunits F6, b, d, and OSCP). Interacts with PRICKLE3.

The protein localises to the mitochondrion membrane. Its function is as follows. Subunit 8, of the mitochondrial membrane ATP synthase complex (F(1)F(0) ATP synthase or Complex V) that produces ATP from ADP in the presence of a proton gradient across the membrane which is generated by electron transport complexes of the respiratory chain. ATP synthase complex consist of a soluble F(1) head domain - the catalytic core - and a membrane F(1) domain - the membrane proton channel. These two domains are linked by a central stalk rotating inside the F(1) region and a stationary peripheral stalk. During catalysis, ATP synthesis in the catalytic domain of F(1) is coupled via a rotary mechanism of the central stalk subunits to proton translocation. In vivo, can only synthesize ATP although its ATP hydrolase activity can be activated artificially in vitro. Part of the complex F(0) domain. The protein is ATP synthase F(0) complex subunit 8 of Oryctolagus cuniculus (Rabbit).